The chain runs to 1323 residues: Tetratricopeptide repeat protein 21 homolog (1323 aa).

TPR repeat units follow at residues 56 to 89, 411 to 444, 580 to 613, 667 to 700, 702 to 735, 736 to 768, 770 to 802, 804 to 835, 845 to 878, 892 to 925, 927 to 959, 961 to 993, 995 to 1027, 1031 to 1064, 1203 to 1236, 1238 to 1270, and 1272 to 1305; these read VPLAILKGVCLVLLGKIPEAIRHLEAFSNDQNFS, ESPFYYLIASVLAKHSKDKSFENFRQHIENLIEM, SLYHLIKSKTFKKRNENDEALKTLKMALQIPKKE, HQLVIAQAQLYLTKGHTEKALAILRKIQPGQSNF, LSRIRMAEIYLEEKKDKRMFAACYRELLKVEPTP, GSYSLLGDAFMKVQEPEDAINFYEQALKMQSKD, QLAEKIGEAYVMAHLYSKAVNFYESSMNIYKDK, MRLKLANLLLRLKNYEKCEKILRAPLDREPEP, IQFLLLLAECHEMVENIPEAMKDFEKAKSLHNKI, ARICNLQAELYYRRHEFPPAIEVCKQALQFYETD, KSNLLLSRIYKDENKWTLVLQPCQAVLQVDPHN, EANLILADFYYIKSEADHAMTSYITLLNKNPLH, HALFRVVELYCRKGEHHKADEFLNSARDANPRC, AGYSVCRGRFEWYTGDQSQALRCYSRAKDSPNVV, EKCWLLMAEIYVGASKWEQAGTYLDQVLKYNCNS, RAFELYGQAKEKEQKYVEASKIYEKAFNTTNQK, and CSFGYKLAFTLLKTRRLFLCIETCQKVLDINPQY.

This sequence belongs to the TTC21 family.

The polypeptide is Tetratricopeptide repeat protein 21 homolog (Caenorhabditis briggsae).